The primary structure comprises 241 residues: Large ribosomal subunit protein uL3 (241 aa).

The residue at position 157 (Q157) is an N5-methylglutamine.

It belongs to the universal ribosomal protein uL3 family. As to quaternary structure, part of the 50S ribosomal subunit. Forms a cluster with proteins L14 and L19. In terms of processing, methylated by PrmB.

Its function is as follows. One of the primary rRNA binding proteins, it binds directly near the 3'-end of the 23S rRNA, where it nucleates assembly of the 50S subunit. This chain is Large ribosomal subunit protein uL3, found in Vesicomyosocius okutanii subsp. Calyptogena okutanii (strain HA).